We begin with the raw amino-acid sequence, 229 residues long: Thiamine import ATP-binding protein ThiQ (229 aa).

An ABC transporter domain is found at 2-229; that stretch reads LHLENIRVRQ…NNAEPLRPWM (228 aa). 32–39 contributes to the ATP binding site; that stretch reads GASGSGKS.

The protein belongs to the ABC transporter superfamily. Thiamine importer (TC 3.A.1.19.1) family. The complex is composed of two ATP-binding proteins (ThiQ), two transmembrane proteins (ThiP) and a solute-binding protein (ThiB).

Its subcellular location is the cell inner membrane. It catalyses the reaction thiamine(out) + ATP + H2O = thiamine(in) + ADP + phosphate + H(+). In terms of biological role, part of the ABC transporter complex ThiBPQ involved in thiamine import. Responsible for energy coupling to the transport system. This chain is Thiamine import ATP-binding protein ThiQ, found in Jannaschia sp. (strain CCS1).